The chain runs to 63 residues: MRLHHLLLAVLFLVLSAGSGFTQRVRNPQSCRWNMGVCIPFLCRVGMRQIGTCFGPRVPCCRR.

An N-terminal signal peptide occupies residues 1-22 (MRLHHLLLAVLFLVLSAGSGFT). Residue Q23 is modified to Pyrrolidone carboxylic acid. Disulfide bonds link C31–C60, C38–C53, and C43–C61.

Belongs to the beta-defensin family. As to expression, neutrophilic granules.

Its subcellular location is the secreted. In terms of biological role, has bactericidal activity. Active against E.coli ML35 and S.aureus 502A. The polypeptide is Beta-defensin 4 (DEFB4) (Bos taurus (Bovine)).